Here is a 200-residue protein sequence, read N- to C-terminus: Transcription elongation factor A protein-like 3 (200 aa).

The segment at 1-200 is disordered; the sequence is MEKPYNKNEG…QRGLHDIPYL (200 aa). A compositionally biased stretch (acidic residues) spans 20–36; sequence DEVEPDDEGKSDEEEKP. Ser-30 bears the Phosphoserine mark. The segment covering 37 to 50 has biased composition (basic and acidic residues); the sequence is DVEGKTECEGKRED. Acidic residues predominate over residues 51-64; that stretch reads EGEPGDEGQLEDEG. Ser-65 is modified (phosphoserine). Basic and acidic residues-rich tracts occupy residues 65 to 80, 96 to 107, and 115 to 154; these read SQEKQGRSEGEGKPQG, AAEKRPAEDYVP, and DRGTDDSPKDSQEDLQERHLSSEEMMRECGDVSRAQEELR.

Belongs to the TFS-II family. TFA subfamily.

It is found in the nucleus. May be involved in transcriptional regulation. The polypeptide is Transcription elongation factor A protein-like 3 (TCEAL3) (Homo sapiens (Human)).